The sequence spans 289 residues: RING-H2 finger protein ATL29 (289 aa).

A helical membrane pass occupies residues 25–45; it reads VILTVILLVFFFIGFFTLYFC. Residues 110-152 form an RING-type; atypical zinc finger; that stretch reads CAICLLEFDGDHVLRLLTTCYHVFHQECIDLWFESHRTCPVCR. Residues 179–237 form a disordered region; that stretch reads TSDDEEDDHHRQQTTTQIDTWPSSGQTSSIKKEQNLPEKFSRSHSTGHSIVRNKPEEED. The span at 191–207 shows a compositional bias: polar residues; that stretch reads QTTTQIDTWPSSGQTSS. Over residues 208 to 219 the composition is skewed to basic and acidic residues; it reads IKKEQNLPEKFS.

The protein belongs to the RING-type zinc finger family. ATL subfamily.

It localises to the membrane. It catalyses the reaction S-ubiquitinyl-[E2 ubiquitin-conjugating enzyme]-L-cysteine + [acceptor protein]-L-lysine = [E2 ubiquitin-conjugating enzyme]-L-cysteine + N(6)-ubiquitinyl-[acceptor protein]-L-lysine.. It functions in the pathway protein modification; protein ubiquitination. The chain is RING-H2 finger protein ATL29 (ATL29) from Arabidopsis thaliana (Mouse-ear cress).